The primary structure comprises 116 residues: SPbeta prophage-derived uncharacterized protein YomQ (116 aa).

This Bacillus subtilis (strain 168) protein is SPbeta prophage-derived uncharacterized protein YomQ (yomQ).